The following is a 434-amino-acid chain: Ribosomal protein uS12 methylthiotransferase RimO (434 aa).

In terms of domain architecture, MTTase N-terminal spans A2–P112. [4Fe-4S] cluster is bound by residues C11, C47, C76, C142, C146, and C149. The region spanning L128–R365 is the Radical SAM core domain. Positions Q368–A434 constitute a TRAM domain.

It belongs to the methylthiotransferase family. RimO subfamily. Requires [4Fe-4S] cluster as cofactor.

Its subcellular location is the cytoplasm. The catalysed reaction is L-aspartate(89)-[ribosomal protein uS12]-hydrogen + (sulfur carrier)-SH + AH2 + 2 S-adenosyl-L-methionine = 3-methylsulfanyl-L-aspartate(89)-[ribosomal protein uS12]-hydrogen + (sulfur carrier)-H + 5'-deoxyadenosine + L-methionine + A + S-adenosyl-L-homocysteine + 2 H(+). Functionally, catalyzes the methylthiolation of an aspartic acid residue of ribosomal protein uS12. The polypeptide is Ribosomal protein uS12 methylthiotransferase RimO (Thermus thermophilus (strain ATCC BAA-163 / DSM 7039 / HB27)).